The primary structure comprises 294 residues: Phosphatidylserine decarboxylase proenzyme (294 aa).

Residues Asp100, His157, and Ser261 each act as charge relay system; for autoendoproteolytic cleavage activity in the active site. Ser261 acts as the Schiff-base intermediate with substrate; via pyruvic acid; for decarboxylase activity in catalysis. Ser261 carries the post-translational modification Pyruvic acid (Ser); by autocatalysis.

The protein belongs to the phosphatidylserine decarboxylase family. PSD-B subfamily. Prokaryotic type I sub-subfamily. Heterodimer of a large membrane-associated beta subunit and a small pyruvoyl-containing alpha subunit. The cofactor is pyruvate. Is synthesized initially as an inactive proenzyme. Formation of the active enzyme involves a self-maturation process in which the active site pyruvoyl group is generated from an internal serine residue via an autocatalytic post-translational modification. Two non-identical subunits are generated from the proenzyme in this reaction, and the pyruvate is formed at the N-terminus of the alpha chain, which is derived from the carboxyl end of the proenzyme. The autoendoproteolytic cleavage occurs by a canonical serine protease mechanism, in which the side chain hydroxyl group of the serine supplies its oxygen atom to form the C-terminus of the beta chain, while the remainder of the serine residue undergoes an oxidative deamination to produce ammonia and the pyruvoyl prosthetic group on the alpha chain. During this reaction, the Ser that is part of the protease active site of the proenzyme becomes the pyruvoyl prosthetic group, which constitutes an essential element of the active site of the mature decarboxylase.

The protein resides in the cell membrane. The catalysed reaction is a 1,2-diacyl-sn-glycero-3-phospho-L-serine + H(+) = a 1,2-diacyl-sn-glycero-3-phosphoethanolamine + CO2. Its pathway is phospholipid metabolism; phosphatidylethanolamine biosynthesis; phosphatidylethanolamine from CDP-diacylglycerol: step 2/2. In terms of biological role, catalyzes the formation of phosphatidylethanolamine (PtdEtn) from phosphatidylserine (PtdSer). In Histophilus somni (strain 2336) (Haemophilus somnus), this protein is Phosphatidylserine decarboxylase proenzyme.